The following is a 487-amino-acid chain: MSPVYVNLLGSVGLLAFWYFSYRWIQRKRLEDPLPPWLRKKKACALTRRSRHRLRRQHGVIDGENSETERSVDLVAALLAEAGEESVTEDTEREDTEEEREDEEEENEARTPEVNPIDAEGLSGLAREACEALKKALRRHRFLWQRRQRARMLQHNGPQQSHHAAVFCRVHGLRGFQVSVWLLLTLLWSTGHGVSVRCTYHGTDVNRTSNTTSMNCHLNCTRNHTQIYNGPCLGTEARLPLNVTFNQSRRKWHSVMLKFGFQYHLEGWFPLRVLNESREINVTEVHGEVACFRNDTNVTVGQLTLNFTGHSYVLRAIAHTSPFESYVRWEETNVTDNATSSENTTTVMSTLTKYAESDYIFLQDMCPRFLKRTVKLTRNKTKHNVTVTGNNMTTLPVWTPECKGWTYWTTLSVMWRNRRSALLRAKSRALGHWALLSICTVAAGSIALLSLFCILLIGLRRDLLEDFRYICRDEGSSSTKNDVHRIV.

The first 22 residues, 1-22, serve as a signal peptide directing secretion; sequence MSPVYVNLLGSVGLLAFWYFSY. Residues 83 to 107 show a composition bias toward acidic residues; sequence GEESVTEDTEREDTEEEREDEEEEN. The interval 83–121 is disordered; the sequence is GEESVTEDTEREDTEEEREDEEEENEARTPEVNPIDAEG. N-linked (GlcNAc...) asparagine; by host glycosylation is found at Asn-206, Asn-210, Asn-219, Asn-223, Asn-242, Asn-246, Asn-275, Asn-281, Asn-294, Asn-297, Asn-306, Asn-333, Asn-337, Asn-343, Asn-379, Asn-384, and Asn-391. Residues 433-459 form a helical membrane-spanning segment; the sequence is WALLSICTVAAGSIALLSLFCILLIGL.

This sequence belongs to the immediate early glycoprotein family. Interacts with host BAX. Interacts with host RSAD2/viperin; this interaction results in RSAD2/viperin relocalization from the endoplasmic reticulum to the mitochondria, actin cytoskeleton disruption and enhancement of infection. Interacts with host PEX19; this interaction inhibits the peroxisomal-dependent antiviral signaling. Interacts with host CHCHD6; this interaction rewires mitochondria by engaging the conserved MICOS complex.

The protein resides in the host endoplasmic reticulum membrane. Its subcellular location is the host Golgi apparatus membrane. The protein localises to the host mitochondrion membrane. It localises to the host peroxisome. Its function is as follows. Multifunctional transmembrane protein that plays several key roles in viral replication. Rapidely traffics from the host endoplasmic reticulum to the outer mitochondrial membrane where it acts to inhibit host immune response, block apoptotic signaling, regulate calcium flux, and induce mitochondrial fragmentation. Sequesters proapoptotic BAX at the outer mitochondrial membrane and prevents cytochrome c release and subsequent initiation of the proapoptotic cascade. Also provoques a calcium efflux from host endoplasmic reticulum and F-actin cytoskeleton disruption. Participates in the increase of host mitochondrial biogenesis, thus promoting viral replication by efficient use of newly made mitochondria. Additionally, a subset of vMIA localizes to peroxisomes, causing fragmentation and blocking peroxisomal MAVS signaling. Mechanistically, inhibits host MAVS oligomerization at peroxisomes in a mitochondrial fission factors (MFF)-dependent manner and in mitochondria independently of mitochondrial fission factors. Plays an essential role in the trafficking of host viperin/RSAD2 from the endoplasmic reticulum to the viral assembly compartment via the mitochondria during viral infection as failure of viperin to localize to the mitochondria results in insufficient lipogenesis and thus reduces viral replication. May play a role in escape from the host antiviral response. The polypeptide is UL37 immediate early glycoprotein (UL37) (Human cytomegalovirus (strain AD169) (HHV-5)).